Reading from the N-terminus, the 707-residue chain is Elongation factor G 2 (707 aa).

Positions Glu-8–Ala-290 constitute a tr-type G domain. GTP is bound by residues Ala-17 to Thr-24, Asp-88 to His-92, and Asn-142 to Asp-145.

Belongs to the TRAFAC class translation factor GTPase superfamily. Classic translation factor GTPase family. EF-G/EF-2 subfamily.

The protein resides in the cytoplasm. In terms of biological role, catalyzes the GTP-dependent ribosomal translocation step during translation elongation. During this step, the ribosome changes from the pre-translocational (PRE) to the post-translocational (POST) state as the newly formed A-site-bound peptidyl-tRNA and P-site-bound deacylated tRNA move to the P and E sites, respectively. Catalyzes the coordinated movement of the two tRNA molecules, the mRNA and conformational changes in the ribosome. This chain is Elongation factor G 2, found in Bordetella bronchiseptica (strain ATCC BAA-588 / NCTC 13252 / RB50) (Alcaligenes bronchisepticus).